The sequence spans 80 residues: N-V protease (80 aa).

This sequence belongs to the peptidase S8 family. In terms of assembly, monomer. As to expression, body cavity.

The protein resides in the secreted. Inhibited by the serine protease inhibitors DFP, PMSF and TLCK. Not inhibited by the serine protease inhibitors aprotinin, elastinal, SBTI and benzamidine, the cysteine protease inhibitors iodoacetate and E64, or the metalloprotease inhibitors EDTA and EGTA. In terms of biological role, serine protease. Hydrolyzes the alpha chains of fibrin and fibrinogen completely, has lower activity on the beta and gamma chains of fibrin and fibrinogen. The chain is N-V protease from Alitta virens (Sandworm).